Here is a 695-residue protein sequence, read N- to C-terminus: Elongation factor G 2 (695 aa).

Residues 5-280 (SKYRNIGIFA…AVVDYLPSPT (276 aa)) enclose the tr-type G domain. Residues 14–21 (AHVDAGKT), 78–82 (DTPGH), and 132–135 (NKLD) contribute to the GTP site.

This sequence belongs to the TRAFAC class translation factor GTPase superfamily. Classic translation factor GTPase family. EF-G/EF-2 subfamily.

Its subcellular location is the cytoplasm. Catalyzes the GTP-dependent ribosomal translocation step during translation elongation. During this step, the ribosome changes from the pre-translocational (PRE) to the post-translocational (POST) state as the newly formed A-site-bound peptidyl-tRNA and P-site-bound deacylated tRNA move to the P and E sites, respectively. Catalyzes the coordinated movement of the two tRNA molecules, the mRNA and conformational changes in the ribosome. This Photobacterium profundum (strain SS9) protein is Elongation factor G 2.